The following is a 217-amino-acid chain: MLITFEGIDGAGKSTQIKELVHALGLQGIEAVVLREPGGTTVAEKIRQILLESSHGITPVGELLLFSASRAELVQEVIRPALASGKTIILDRFFDSTTAYQGYGRGIDMELLRSIIAISTCGITPDITFYLDLEPEEALKRKYSKTSIPLAFEGEELDRMERSGLEFYRNVRRGYLDIKQLENRRFVQLNALDPVAVIHGKILALLGERFPSFLNPV.

Position 7 to 14 (7 to 14) interacts with ATP; it reads GIDGAGKS.

The protein belongs to the thymidylate kinase family.

It catalyses the reaction dTMP + ATP = dTDP + ADP. In terms of biological role, phosphorylation of dTMP to form dTDP in both de novo and salvage pathways of dTTP synthesis. The sequence is that of Thymidylate kinase from Pelodictyon phaeoclathratiforme (strain DSM 5477 / BU-1).